The following is a 153-amino-acid chain: Superoxide dismutase [Cu-Zn] (153 aa).

His45, His47, and His62 together coordinate Cu cation. A disulfide bridge connects residues Cys56 and Cys145. Residues His62, His70, His79, and Asp82 each contribute to the Zn(2+) site. Residue His119 coordinates Cu cation.

It belongs to the Cu-Zn superoxide dismutase family. Homodimer. Cu cation serves as cofactor. Zn(2+) is required as a cofactor.

The protein localises to the cytoplasm. The enzyme catalyses 2 superoxide + 2 H(+) = H2O2 + O2. In terms of biological role, destroys radicals which are normally produced within the cells and which are toxic to biological systems. In Drosophila virilis (Fruit fly), this protein is Superoxide dismutase [Cu-Zn].